Here is a 105-residue protein sequence, read N- to C-terminus: Precursor of CEP15 (105 aa).

Positions methionine 1–serine 29 are cleaved as a signal peptide. Positions threonine 30 to aspartate 90 are excised as a propeptide. Residues aspartate 68–serine 80 are compositionally biased toward low complexity. The segment at aspartate 68–histidine 105 is disordered. Hydroxyproline is present on residues proline 99 and proline 101.

Belongs to the C-terminally encoded plant signaling peptide (CEP) family. Interacts with CEP receptors (e.g. CEPR1 and CEPR2). In terms of processing, the mature small signaling peptide is generated by proteolytic processing of the longer precursor.

The protein localises to the secreted. It localises to the extracellular space. The protein resides in the apoplast. Extracellular signaling peptide that may regulate primary root growth rate and systemic nitrogen (N)-demand signaling. This is Precursor of CEP15 from Arabidopsis thaliana (Mouse-ear cress).